Consider the following 228-residue polypeptide: N-acetyltransferase family 8 member 3 (228 aa).

2 consecutive transmembrane segments (helical) span residues 36 to 56 and 58 to 78; these read MLLL…LFLA and GSWL…WLLA. In terms of domain architecture, N-acetyltransferase spans 61–217; the sequence is LLVLLSTLTL…RNSPMICLKY (157 aa).

Belongs to the camello family.

The protein resides in the nucleus membrane. Its subcellular location is the cytoplasm. It localises to the perinuclear region. It carries out the reaction L-lysyl-[protein] + acetyl-CoA = N(6)-acetyl-L-lysyl-[protein] + CoA + H(+). Functionally, has histone acetyltransferase activity in vitro, with specificity for histone H4. The sequence is that of N-acetyltransferase family 8 member 3 from Rattus norvegicus (Rat).